The chain runs to 502 residues: MEFSVKSGSPEKQRSACIVVGVYEPRRLSGIAEQLDKISEGYISNLLRRGDLEGKPGQMLLLHHVPNVLSERVLLVGCGKERELDERQYKQIITKTISTLNETGSMEAVCFLTELHVKGRDTYWKVRQAIESTQNSLYSFDALKTRKGETRRPLRKMVFNVPTRRELTIGERAIEHGTAVSAGMHLCRDVANMPPNICNPAYLASQARQMAEVYENLNVTTIGEEQMAKLGMNSYLAVGRASANESIMTVMEYQGAVDSTEKPIVLVGKGLTFDSGGISLKPGEAMDEMKYDMGGAAGVIGTMKALCEMKLPINVIGILAGCENMPAGNAYRPGDILTTMSGQTVEVLNTDAEGRLVLCDVLTYVERFDPELVIDTATLTGACVIALGKHASGLFSSHNPLAHEMLNAGEQSGDRAWRMPLWDEYQDMLDSPFADMTNLGGRPAGSITAACFLSRFTKKYNWAHLDVAGTAWNSGANKGSTGRPVPILSQFLINRAGVEISE.

The Mn(2+) site is built by Lys269 and Asp274. Lys281 is an active-site residue. 3 residues coordinate Mn(2+): Asp292, Asp351, and Glu353. The active site involves Arg355.

This sequence belongs to the peptidase M17 family. The cofactor is Mn(2+).

Its subcellular location is the cytoplasm. It carries out the reaction Release of an N-terminal amino acid, Xaa-|-Yaa-, in which Xaa is preferably Leu, but may be other amino acids including Pro although not Arg or Lys, and Yaa may be Pro. Amino acid amides and methyl esters are also readily hydrolyzed, but rates on arylamides are exceedingly low.. The catalysed reaction is Release of an N-terminal amino acid, preferentially leucine, but not glutamic or aspartic acids.. Presumably involved in the processing and regular turnover of intracellular proteins. Catalyzes the removal of unsubstituted N-terminal amino acids from various peptides. This chain is Probable cytosol aminopeptidase, found in Shewanella frigidimarina (strain NCIMB 400).